Reading from the N-terminus, the 88-residue chain is MKKILIGGIRLYQKYISRFTPATCRFYPTCSAYGIEAIQTHGALKGSYLAIRRISKCHPFHKGGLDFVPPKKDKNADSEHSCKVHHHH.

The interval 68 to 88 is disordered; sequence VPPKKDKNADSEHSCKVHHHH. Residues 69–82 are compositionally biased toward basic and acidic residues; sequence PPKKDKNADSEHSC.

It belongs to the UPF0161 family.

The protein localises to the cell membrane. Functionally, could be involved in insertion of integral membrane proteins into the membrane. This is Putative membrane protein insertion efficiency factor from Listeria monocytogenes serovar 1/2a (strain ATCC BAA-679 / EGD-e).